The primary structure comprises 600 residues: Proline--tRNA ligase (600 aa).

The protein belongs to the class-II aminoacyl-tRNA synthetase family. ProS type 1 subfamily. As to quaternary structure, homodimer.

Its subcellular location is the cytoplasm. The enzyme catalyses tRNA(Pro) + L-proline + ATP = L-prolyl-tRNA(Pro) + AMP + diphosphate. Its function is as follows. Catalyzes the attachment of proline to tRNA(Pro) in a two-step reaction: proline is first activated by ATP to form Pro-AMP and then transferred to the acceptor end of tRNA(Pro). As ProRS can inadvertently accommodate and process non-cognate amino acids such as alanine and cysteine, to avoid such errors it has two additional distinct editing activities against alanine. One activity is designated as 'pretransfer' editing and involves the tRNA(Pro)-independent hydrolysis of activated Ala-AMP. The other activity is designated 'posttransfer' editing and involves deacylation of mischarged Ala-tRNA(Pro). The misacylated Cys-tRNA(Pro) is not edited by ProRS. The protein is Proline--tRNA ligase of Prochlorococcus marinus (strain MIT 9211).